A 430-amino-acid polypeptide reads, in one-letter code: Histidine--tRNA ligase (430 aa).

This sequence belongs to the class-II aminoacyl-tRNA synthetase family.

It is found in the cytoplasm. It carries out the reaction tRNA(His) + L-histidine + ATP = L-histidyl-tRNA(His) + AMP + diphosphate + H(+). The polypeptide is Histidine--tRNA ligase (Metallosphaera sedula (strain ATCC 51363 / DSM 5348 / JCM 9185 / NBRC 15509 / TH2)).